Here is a 166-residue protein sequence, read N- to C-terminus: MRCPFCHFVETDVIDTRKLYEGEVIRRRRRCRACGRRFTTYERIESVSLMVVKKDGTREPYDREKIARGVRTACYRRPVSAAAIEQLVNDVETAIMNTDEHEISSQAIGDAVMQRLRDLDEVAYIRFASVYRAFTDIGKLREAVDELLDREGVRNGHLSPKPAEDS.

The segment at 3 to 34 (CPFCHFVETDVIDTRKLYEGEVIRRRRRCRAC) is a zinc-finger region. One can recognise an ATP-cone domain in the interval 49–139 (LMVVKKDGTR…VYRAFTDIGK (91 aa)).

It belongs to the NrdR family. The cofactor is Zn(2+).

Its function is as follows. Negatively regulates transcription of bacterial ribonucleotide reductase nrd genes and operons by binding to NrdR-boxes. The chain is Transcriptional repressor NrdR from Chloroflexus aurantiacus (strain ATCC 29364 / DSM 637 / Y-400-fl).